Here is a 241-residue protein sequence, read N- to C-terminus: Phycocyanobilin:ferredoxin oxidoreductase (241 aa).

Belongs to the HY2 family.

The enzyme catalyses (2R,3Z)-phycocyanobilin + 4 oxidized [2Fe-2S]-[ferredoxin] = biliverdin IXalpha + 4 reduced [2Fe-2S]-[ferredoxin] + 4 H(+). Its function is as follows. Catalyzes the four-electron reduction of biliverdin IX-alpha (2-electron reduction at both the A and D rings); the reaction proceeds via an isolatable 2-electron intermediate, 181,182-dihydrobiliverdin. This Prochlorococcus marinus (strain MIT 9215) protein is Phycocyanobilin:ferredoxin oxidoreductase.